The primary structure comprises 784 residues: ATP-dependent 6-phosphofructokinase, platelet type (784 aa).

The residue at position 1 (Met-1) is an N-acetylmethionine. An N-terminal catalytic PFK domain 1 region spans residues 1–398 (MSDLDSSSSS…NLNTYKRLAI (398 aa)). A phosphoserine mark is found at Ser-2, Ser-6, and Ser-20. ATP contacts are provided by residues Gly-33, 96–97 (RC), and 126–129 (GDGS). A Mg(2+)-binding site is contributed by Asp-127. Ser-141 bears the Phosphoserine mark. Substrate contacts are provided by residues 172–174 (SID), Arg-209, 216–218 (MGR), Glu-272, Arg-300, and 306–309 (HVQR). Residue Asp-174 is the Proton acceptor of the active site. The residue at position 394 (Lys-394) is an N6-acetyllysine. Residues 399-410 (KLPDEKIVKSNC) form an interdomain linker region. The segment at 411-784 (NVAVINVGAP…LESLQHHEEL (374 aa)) is C-terminal regulatory PFK domain 2. Arg-480 is a beta-D-fructose 2,6-bisphosphate binding site. Lys-485 bears the N6-acetyllysine mark. Residues 537–541 (TVSNN), Arg-575, 582–584 (MGG), and Glu-638 contribute to the beta-D-fructose 2,6-bisphosphate site. Residue Ser-539 is glycosylated (O-linked (GlcNAc) serine). A Phosphotyrosine modification is found at Tyr-650. Beta-D-fructose 2,6-bisphosphate-binding positions include Arg-664 and 670-673 (HMQQ). N6-acetyllysine is present on Lys-687. Position 743 (Arg-743) interacts with beta-D-fructose 2,6-bisphosphate.

Belongs to the phosphofructokinase type A (PFKA) family. ATP-dependent PFK group I subfamily. Eukaryotic two domain clade 'E' sub-subfamily. Homo- and heterotetramers. Phosphofructokinase (PFK) enzyme functions as a tetramer composed of different combinations of 3 types of subunits, called PFKM (M), PFKL (L) and PFKP (P). The composition of the PFK tetramer differs according to the tissue type it is present in. The kinetic and regulatory properties of the tetrameric enzyme are dependent on the subunit composition, hence can vary across tissues. Interacts with ATG4B; promoting phosphorylation of ATG4B. Mg(2+) is required as a cofactor. In terms of processing, glcNAcylation decreases enzyme activity. As to expression, expression is constant during tumor growth and markedly decreases when cell proliferation stops.

It localises to the cytoplasm. It catalyses the reaction beta-D-fructose 6-phosphate + ATP = beta-D-fructose 1,6-bisphosphate + ADP + H(+). It functions in the pathway carbohydrate degradation; glycolysis; D-glyceraldehyde 3-phosphate and glycerone phosphate from D-glucose: step 3/4. With respect to regulation, allosterically activated by ADP, AMP, or fructose 2,6-bisphosphate, and allosterically inhibited by ATP or citrate. In terms of biological role, catalyzes the phosphorylation of D-fructose 6-phosphate to fructose 1,6-bisphosphate by ATP, the first committing step of glycolysis. The chain is ATP-dependent 6-phosphofructokinase, platelet type (Pfkp) from Mus musculus (Mouse).